Consider the following 189-residue polypeptide: Putative dihydrofolate reductase (189 aa).

In terms of domain architecture, DHFR spans 3–185 (KMNLIVAMDA…LKFEFCKWKV (183 aa)). NADP(+) is bound by residues alanine 9 and 15-21 (GIGKNGV). Substrate is bound at residue 29 to 34 (DMQYFA). Residue 53 to 55 (RKC) participates in NADP(+) binding. Arginine 69 is a substrate binding site. NADP(+)-binding positions include 75–77 (SRQ) and 115–122 (GGAEIYDL).

It belongs to the dihydrofolate reductase family.

It carries out the reaction (6S)-5,6,7,8-tetrahydrofolate + NADP(+) = 7,8-dihydrofolate + NADPH + H(+). It functions in the pathway cofactor biosynthesis; tetrahydrofolate biosynthesis; 5,6,7,8-tetrahydrofolate from 7,8-dihydrofolate: step 1/1. Key enzyme in folate metabolism. Catalyzes an essential reaction for de novo glycine and purine synthesis, and for DNA precursor synthesis. The chain is Putative dihydrofolate reductase (dhfr-1) from Caenorhabditis elegans.